We begin with the raw amino-acid sequence, 276 residues long: Large ribosomal subunit protein uL2 (276 aa).

Residues 219-276 are disordered; that stretch reads TVRGSAMNPNDHPHGGGEGRTSIGRPAPVTPWGKPALGYKTRDSKKASNKMIVSRRKK.

Belongs to the universal ribosomal protein uL2 family. Part of the 50S ribosomal subunit. Forms a bridge to the 30S subunit in the 70S ribosome.

Its function is as follows. One of the primary rRNA binding proteins. Required for association of the 30S and 50S subunits to form the 70S ribosome, for tRNA binding and peptide bond formation. It has been suggested to have peptidyltransferase activity; this is somewhat controversial. Makes several contacts with the 16S rRNA in the 70S ribosome. The sequence is that of Large ribosomal subunit protein uL2 from Alkaliphilus oremlandii (strain OhILAs) (Clostridium oremlandii (strain OhILAs)).